The following is a 171-amino-acid chain: NADH-quinone oxidoreductase subunit C (171 aa).

Belongs to the complex I 30 kDa subunit family. As to quaternary structure, NDH-1 is composed of 14 different subunits. Subunits NuoB, C, D, E, F, and G constitute the peripheral sector of the complex.

Its subcellular location is the cell membrane. The enzyme catalyses a quinone + NADH + 5 H(+)(in) = a quinol + NAD(+) + 4 H(+)(out). In terms of biological role, NDH-1 shuttles electrons from NADH, via FMN and iron-sulfur (Fe-S) centers, to quinones in the respiratory chain. The immediate electron acceptor for the enzyme in this species is believed to be ubiquinone. Couples the redox reaction to proton translocation (for every two electrons transferred, four hydrogen ions are translocated across the cytoplasmic membrane), and thus conserves the redox energy in a proton gradient. The chain is NADH-quinone oxidoreductase subunit C from Herpetosiphon aurantiacus (strain ATCC 23779 / DSM 785 / 114-95).